The following is a 137-amino-acid chain: Envelope glycoprotein L (137 aa).

A signal peptide spans 1 to 25 (MRAVGVFLATCLVTIFVLPTWGNWA). An interaction with gH region spans residues 23–128 (NWAYPCCHVT…SVEDLFGANL (106 aa)). Disulfide bonds link cysteine 28–cysteine 56 and cysteine 29–cysteine 79.

Belongs to the herpesviridae glycoprotein L family. Interacts with glycoprotein H (gH); this interaction is necessary for the correct processing and cell surface expression of gH. The heterodimer gH/gL seems to interact with gB trimers during fusion. The heterodimer gH/gL interacts with host EPHA2 to facilitate virus internalization and fusion.

The protein resides in the virion membrane. It localises to the host cell membrane. It is found in the host Golgi apparatus. The protein localises to the host trans-Golgi network. In terms of biological role, the heterodimer glycoprotein H-glycoprotein L is required for the fusion of viral and plasma membranes leading to virus entry into the host cell. Acts as a functional inhibitor of gH and maintains gH in an inhibited form. Upon binding to host integrins, gL dissociates from gH leading to activation of the viral fusion glycoproteins gB and gH. The heterodimer gH/gL targets also host EPHA2 to promote viral entry. The chain is Envelope glycoprotein L from Homo sapiens (Human).